The primary structure comprises 358 residues: Fructose-bisphosphate aldolase 1, cytoplasmic (358 aa).

Substrate is bound at residue R39. E183 serves as the catalytic Proton acceptor. The Schiff-base intermediate with dihydroxyacetone-P role is filled by K225. Substrate contacts are provided by residues 266-268 (SGG) and R298.

Belongs to the class I fructose-bisphosphate aldolase family. In terms of assembly, homotetramer. As to expression, expressed in callus.

The protein localises to the cytoplasm. Its subcellular location is the cytosol. The enzyme catalyses beta-D-fructose 1,6-bisphosphate = D-glyceraldehyde 3-phosphate + dihydroxyacetone phosphate. It participates in carbohydrate degradation; glycolysis; D-glyceraldehyde 3-phosphate and glycerone phosphate from D-glucose: step 4/4. Fructose-bisphosphate aldolase that plays a key role in glycolysis and gluconeogenesis. Involved in gibberellin-mediated root growth. May be regulated by CDPK13. Associates with vacuolar proton ATPase (V-ATPase) and may regulate the V-ATPase-mediated control of root cell elongation. This Oryza sativa subsp. japonica (Rice) protein is Fructose-bisphosphate aldolase 1, cytoplasmic.